A 500-amino-acid chain; its full sequence is Cytochrome P450 2D15 (500 aa).

Heme is bound at residue Cys-446.

The protein belongs to the cytochrome P450 family. Heme is required as a cofactor. Liver. Also detected in several other tissues.

Its subcellular location is the endoplasmic reticulum membrane. It localises to the microsome membrane. It catalyses the reaction an organic molecule + reduced [NADPH--hemoprotein reductase] + O2 = an alcohol + oxidized [NADPH--hemoprotein reductase] + H2O + H(+). High activity for the hydroxylation of bunitrolol and imipramine; low activity on debrisoquine. The protein is Cytochrome P450 2D15 (CYP2D15) of Canis lupus familiaris (Dog).